Here is a 33-residue protein sequence, read N- to C-terminus: Kunitz-type serine protease inhibitor hainantoxin F7-25.66 (33 aa).

A BPTI/Kunitz inhibitor domain is found at 4–33 (CRLPSDRGRCKASFERWYFNGRTCAKFIYG).

This sequence belongs to the venom Kunitz-type family. 02 (native) subfamily. Expressed by the venom gland.

It is found in the secreted. Functionally, serine protease inhibitor that inhibits trypsin at a molar ratio of 1:1. The sequence is that of Kunitz-type serine protease inhibitor hainantoxin F7-25.66 from Cyriopagopus hainanus (Chinese bird spider).